Reading from the N-terminus, the 206-residue chain is Probable N-acetyltransferase 14 (206 aa).

The region spanning 9 to 206 (LSVREMREEE…TIVQEFRKDI (198 aa)) is the N-acetyltransferase domain. Helical transmembrane passes span 37 to 57 (LILY…ASSG) and 60 to 80 (FILN…IVGL).

The protein belongs to the camello family.

Its subcellular location is the membrane. In terms of biological role, probable acetyltransferase. This chain is Probable N-acetyltransferase 14 (nat14), found in Xenopus tropicalis (Western clawed frog).